The chain runs to 200 residues: Holliday junction resolvase RecU (200 aa).

The disordered stretch occupies residues 1-25; it reads MTIRYPNGKRYNQASQPHKTPIKKH. The Mg(2+) site is built by T85, D87, E100, and Q119.

It belongs to the RecU family. Requires Mg(2+) as cofactor.

It localises to the cytoplasm. The enzyme catalyses Endonucleolytic cleavage at a junction such as a reciprocal single-stranded crossover between two homologous DNA duplexes (Holliday junction).. Endonuclease that resolves Holliday junction intermediates in genetic recombination. Cleaves mobile four-strand junctions by introducing symmetrical nicks in paired strands. Promotes annealing of linear ssDNA with homologous dsDNA. Required for DNA repair, homologous recombination and chromosome segregation. The sequence is that of Holliday junction resolvase RecU from Bacillus cereus (strain ZK / E33L).